The primary structure comprises 325 residues: MSEIADWQPSASIANLLKKAKIVSNIRRFFADRGVLEVETPMMSQATVTDIHLCPFETQFVGPGASQGLKLYLMTSPEYHMKRLLAANSGPIYQMGRCFRNEEAGRYHNPEFTMLEWYRPCFDMYRLMNEVDDLLQEVLDCEASESLSYQQAFLRYLDIDPLSADKEKLREVAAKLDLSNIADTEENRDTLLQLLFVSGVEPHIGLEKPTFIYHFPASQASLAEISSEDHRVAERFEVYFKGVELANGFRELTDAKEQRLRFERDNRQRVAMGLPEQPIDERFLAALEAGLPECSGVALGVDRLIMLALGVERISDVIAFPVYRA.

Residue S76 to E78 participates in substrate binding. Residues R100–E102 and N109 each bind ATP. Y118 is a substrate binding site. E244–L245 contributes to the ATP binding site. E251 is a substrate binding site. Position 300 (G300) interacts with ATP.

It belongs to the class-II aminoacyl-tRNA synthetase family. EpmA subfamily. Homodimer.

It carries out the reaction D-beta-lysine + L-lysyl-[protein] + ATP = N(6)-((3R)-3,6-diaminohexanoyl)-L-lysyl-[protein] + AMP + diphosphate + H(+). With EpmB is involved in the beta-lysylation step of the post-translational modification of translation elongation factor P (EF-P). Catalyzes the ATP-dependent activation of (R)-beta-lysine produced by EpmB, forming a lysyl-adenylate, from which the beta-lysyl moiety is then transferred to the epsilon-amino group of a conserved specific lysine residue in EF-P. The polypeptide is Elongation factor P--(R)-beta-lysine ligase (Proteus mirabilis (strain HI4320)).